A 373-amino-acid polypeptide reads, in one-letter code: RNA 3'-terminal phosphate cyclase-like protein (373 aa).

The protein belongs to the RNA 3'-terminal cyclase family. Type 2 subfamily. As to quaternary structure, part of the small subunit (SSU) processome, composed of more than 70 proteins and the RNA chaperone small nucleolar RNA (snoRNA) U3. Interacts with BMS1.

It localises to the nucleus. Its subcellular location is the nucleolus. Functionally, as part of the small subunit (SSU) processome, it plays a role in 40S-ribosomal-subunit biogenesis in the early pre-rRNA processing steps at sites A0, A1 and A2 that are required for proper maturation of the 18S RNA. Activates BMS1 by promoting GDP/GTP exchange. Does not have cyclase activity. The chain is RNA 3'-terminal phosphate cyclase-like protein from Homo sapiens (Human).